We begin with the raw amino-acid sequence, 217 residues long: Adenylate kinase (217 aa).

Position 10 to 15 (10 to 15) interacts with ATP; sequence GAGKGT. The interval 30-59 is NMP; the sequence is STGDMFREAIKRGTPLGRQAEVYIKGGRLV. Residues Thr-31, Arg-36, 57 to 59, 85 to 88, and Gln-92 contribute to the AMP site; these read RLV and GFPR. Positions 126 to 163 are LID; sequence GRRVCRQCGATYHVRYNPPAVPGKCDACGQDLVQRADD. Arg-127 lines the ATP pocket. Cys-130 and Cys-133 together coordinate Zn(2+). ATP is bound at residue 136-137; that stretch reads TY. Cys-150 and Cys-153 together coordinate Zn(2+). Residues Arg-160 and Arg-171 each coordinate AMP. Gln-199 serves as a coordination point for ATP.

The protein belongs to the adenylate kinase family. As to quaternary structure, monomer.

It localises to the cytoplasm. It carries out the reaction AMP + ATP = 2 ADP. It functions in the pathway purine metabolism; AMP biosynthesis via salvage pathway; AMP from ADP: step 1/1. Its function is as follows. Catalyzes the reversible transfer of the terminal phosphate group between ATP and AMP. Plays an important role in cellular energy homeostasis and in adenine nucleotide metabolism. The polypeptide is Adenylate kinase (Moorella thermoacetica (strain ATCC 39073 / JCM 9320)).